Reading from the N-terminus, the 138-residue chain is Secreted RxLR effector protein 51 (138 aa).

A signal peptide spans 1–19; that stretch reads MRSSTILFVLGVAMVAVNG. Residues 38-53 carry the RxLR-dEER motif; sequence RLLRSNSGKHKTDEER. Residue Asn-101 is glycosylated (N-linked (GlcNAc...) asparagine).

This sequence belongs to the RxLR effector family.

It localises to the secreted. Its subcellular location is the host nucleus. Secreted effector that completely suppresses the host cell death induced by cell death-inducing proteins. The polypeptide is Secreted RxLR effector protein 51 (Plasmopara viticola (Downy mildew of grapevine)).